Reading from the N-terminus, the 455-residue chain is Phosphoglucosamine mutase (455 aa).

Ser107 serves as the catalytic Phosphoserine intermediate. Mg(2+)-binding residues include Ser107, Asp247, Asp249, and Asp251. Ser107 carries the post-translational modification Phosphoserine.

Belongs to the phosphohexose mutase family. Mg(2+) serves as cofactor. Post-translationally, activated by phosphorylation.

The catalysed reaction is alpha-D-glucosamine 1-phosphate = D-glucosamine 6-phosphate. In terms of biological role, catalyzes the conversion of glucosamine-6-phosphate to glucosamine-1-phosphate. This Leuconostoc citreum (strain KM20) protein is Phosphoglucosamine mutase.